A 4568-amino-acid polypeptide reads, in one-letter code: Dynein heavy chain, cytoplasmic (4568 aa).

A stem region spans residues methionine 1–phenylalanine 1826. Coiled-coil stretches lie at residues glutamine 587 to lysine 652, lysine 814 to lysine 844, glutamine 1241 to serine 1274, arginine 1324 to leucine 1340, and valine 1559 to serine 1591. AAA stretches follow at residues tyrosine 1827–serine 2049, glutamine 2118–glutamine 2394, glutamate 2498–glycine 2747, and glycine 2842–valine 3111. ATP-binding positions include glycine 1865–threonine 1872, glycine 2163–threonine 2170, glycine 2537–threonine 2544, and glycine 2880–threonine 2887. Coiled-coil stretches lie at residues glutamate 3132–glutamate 3229, alanine 3339–tryptophan 3432, and asparagine 3707–alanine 3739. The segment at glutamate 3132–tryptophan 3432 is stalk. 2 AAA regions span residues leucine 3496–glutamine 3725 and alanine 3954–alanine 4169. Positions glutamine 4359–arginine 4386 form a coiled coil.

The protein belongs to the dynein heavy chain family. Consists of at least two heavy chains and a number of intermediate and light chains.

The protein localises to the cytoplasm. The protein resides in the cytoskeleton. Its function is as follows. Cytoplasmic dynein acts as a motor for the intracellular retrograde motility of vesicles and organelles along microtubules. Dynein has ATPase activity; the force-producing power stroke is thought to occur on release of ADP. May play a role in nuclear migration in hypodermal precursor cells. May be involved in the transport of synaptic vesicle components towards the axon of the DA motor neuron. This function may involve the regulation of dynein by pct-1 and/or cdk-5. Involved in the formation of synapses in the dorsal region during synaptic remodeling of DD motor neurons. Required for anterograde trafficking of dense-core vesicles in the DB motor neuron dendrites. Required for the formation of dendritic branches of PVD sensory neurons. May also play a role in GABAergic synaptic vesicle localization in the ventral nerve cord. May play a role in the pairing of homologous chromosomes during meiosis. This is Dynein heavy chain, cytoplasmic from Caenorhabditis elegans.